Consider the following 113-residue polypeptide: MEAKATARYVRISPRKAREVIDMIRGKNIEEALGILQLTPKGATKPIEKVVKSAQANAENNFEMNPDSLYISECYVDEGPTLKRFRPRAMGRATPINKKTSHLTVVVKEQKEG.

This sequence belongs to the universal ribosomal protein uL22 family. In terms of assembly, part of the 50S ribosomal subunit.

This protein binds specifically to 23S rRNA; its binding is stimulated by other ribosomal proteins, e.g. L4, L17, and L20. It is important during the early stages of 50S assembly. It makes multiple contacts with different domains of the 23S rRNA in the assembled 50S subunit and ribosome. Its function is as follows. The globular domain of the protein is located near the polypeptide exit tunnel on the outside of the subunit, while an extended beta-hairpin is found that lines the wall of the exit tunnel in the center of the 70S ribosome. The sequence is that of Large ribosomal subunit protein uL22 from Natranaerobius thermophilus (strain ATCC BAA-1301 / DSM 18059 / JW/NM-WN-LF).